The chain runs to 385 residues: uncharacterized protein (385 aa).

9 helical membrane passes run 12-32, 50-70, 90-110, 132-152, 195-215, 233-253, 272-292, 312-332, and 335-355; these read GVAILGILLLNISAFGLPKAA, WAFLDLIGQVKFLTLFALLFG, LLVLLGFIHGLLFWDGDILLA, FNTGVMLYLVGLGVLLLLGLI, LALGAQYGWQLAGMMLIGAAL, TGFVLVAIGVTINLPAIALQW, LSAPFQAIGYASLFYGFWPQL, YLLQTLICTTLFYHLGLFMHF, and LELLAFVIPVWLANILFSVIW.

It to B.subtilis YxaH and YrkO.

The protein resides in the cell membrane. In terms of biological role, involved in transport. This is an uncharacterized protein from Escherichia coli (strain K12).